The sequence spans 331 residues: Phenylalanine--tRNA ligase alpha subunit (331 aa).

Residue Glu-256 participates in Mg(2+) binding.

The protein belongs to the class-II aminoacyl-tRNA synthetase family. Phe-tRNA synthetase alpha subunit type 1 subfamily. Tetramer of two alpha and two beta subunits. The cofactor is Mg(2+).

The protein localises to the cytoplasm. The catalysed reaction is tRNA(Phe) + L-phenylalanine + ATP = L-phenylalanyl-tRNA(Phe) + AMP + diphosphate + H(+). This is Phenylalanine--tRNA ligase alpha subunit from Colwellia psychrerythraea (strain 34H / ATCC BAA-681) (Vibrio psychroerythus).